Reading from the N-terminus, the 213-residue chain is Uridine kinase (213 aa).

Residue 15-22 (GASASGKS) participates in ATP binding.

This sequence belongs to the uridine kinase family.

It localises to the cytoplasm. The catalysed reaction is uridine + ATP = UMP + ADP + H(+). The enzyme catalyses cytidine + ATP = CMP + ADP + H(+). The protein operates within pyrimidine metabolism; CTP biosynthesis via salvage pathway; CTP from cytidine: step 1/3. Its pathway is pyrimidine metabolism; UMP biosynthesis via salvage pathway; UMP from uridine: step 1/1. The protein is Uridine kinase of Pectobacterium atrosepticum (strain SCRI 1043 / ATCC BAA-672) (Erwinia carotovora subsp. atroseptica).